The sequence spans 282 residues: D-arabinitol 2-dehydrogenase [ribulose-forming] (282 aa).

NADP(+) contacts are provided by leucine 32 and asparagine 53. Serine 170 acts as the Proton donor in catalysis. The NADP(+) site is built by tyrosine 185, lysine 189, isoleucine 218, and threonine 220. The active-site Proton acceptor is tyrosine 185. Residue lysine 189 is the Lowers pKa of active site Tyr of the active site.

The protein belongs to the short-chain dehydrogenases/reductases (SDR) family.

It catalyses the reaction D-arabinitol + NAD(+) = D-ribulose + NADH + H(+). It participates in carbohydrate metabolism; D-arabinitol metabolism. Catalyzes the NAD(+)-dependent oxidation of D-arabinitol at carbon 4 to produce D-ribulose. This is D-arabinitol 2-dehydrogenase [ribulose-forming] (ARD) from Candida tropicalis (Yeast).